The chain runs to 549 residues: Hydroxylamine reductase (549 aa).

[4Fe-4S] cluster contacts are provided by C5, C8, C17, and C23. Residues H242, E266, C310, C402, C430, C455, E490, and K492 each contribute to the hybrid [4Fe-2O-2S] cluster site. C402 carries the post-translational modification Cysteine persulfide.

It belongs to the HCP family. [4Fe-4S] cluster is required as a cofactor. It depends on hybrid [4Fe-2O-2S] cluster as a cofactor.

It localises to the cytoplasm. It catalyses the reaction A + NH4(+) + H2O = hydroxylamine + AH2 + H(+). Functionally, catalyzes the reduction of hydroxylamine to form NH(3) and H(2)O. This chain is Hydroxylamine reductase, found in Clostridium novyi (strain NT).